The following is a 142-amino-acid chain: Large ribosomal subunit protein uL13 (142 aa).

The protein belongs to the universal ribosomal protein uL13 family. In terms of assembly, part of the 50S ribosomal subunit.

Its function is as follows. This protein is one of the early assembly proteins of the 50S ribosomal subunit, although it is not seen to bind rRNA by itself. It is important during the early stages of 50S assembly. This Trichlorobacter lovleyi (strain ATCC BAA-1151 / DSM 17278 / SZ) (Geobacter lovleyi) protein is Large ribosomal subunit protein uL13.